Here is a 137-residue protein sequence, read N- to C-terminus: Large ribosomal subunit protein uL16 (137 aa).

This sequence belongs to the universal ribosomal protein uL16 family. Part of the 50S ribosomal subunit.

Binds 23S rRNA and is also seen to make contacts with the A and possibly P site tRNAs. The polypeptide is Large ribosomal subunit protein uL16 (Nitratidesulfovibrio vulgaris (strain DSM 19637 / Miyazaki F) (Desulfovibrio vulgaris)).